Here is a 206-residue protein sequence, read N- to C-terminus: Large ribosomal subunit protein uL4 (206 aa).

Belongs to the universal ribosomal protein uL4 family. As to quaternary structure, part of the 50S ribosomal subunit.

Functionally, one of the primary rRNA binding proteins, this protein initially binds near the 5'-end of the 23S rRNA. It is important during the early stages of 50S assembly. It makes multiple contacts with different domains of the 23S rRNA in the assembled 50S subunit and ribosome. Forms part of the polypeptide exit tunnel. This Methylocella silvestris (strain DSM 15510 / CIP 108128 / LMG 27833 / NCIMB 13906 / BL2) protein is Large ribosomal subunit protein uL4.